Reading from the N-terminus, the 275-residue chain is Replication protein A 32 kDa subunit (275 aa).

The interval 23–47 (MQSPGGFGSPAPTQGEKKSRSRSQQ) is disordered. The OB DNA-binding region spans 76 to 150 (VTIVGIVRHA…KSVVAFKIAP (75 aa)).

The protein belongs to the replication factor A protein 2 family. In terms of assembly, component of the replication protein A complex (RPA/RP-A), a heterotrimeric complex composed of RPA1, RPA2 and RPA3. Differentially phosphorylated throughout the cell cycle, becoming phosphorylated at the G1-S transition and dephosphorylated in late mitosis. Phosphorylation increases upon replication fork stalling.

The protein localises to the nucleus. Its subcellular location is the PML body. In terms of biological role, as part of the heterotrimeric replication protein A complex (RPA/RP-A), binds and stabilizes single-stranded DNA intermediates, that form during DNA replication or upon DNA stress. It prevents their reannealing and in parallel, recruits and activates different proteins and complexes involved in DNA metabolism. Thereby, it plays an essential role both in DNA replication and the cellular response to DNA damage. This chain is Replication protein A 32 kDa subunit (rpa2), found in Xenopus tropicalis (Western clawed frog).